Here is a 388-residue protein sequence, read N- to C-terminus: P2X purinoceptor 4 (388 aa).

Residues 1–33 are Cytoplasmic-facing; that stretch reads MAGCCAALAAFLFEYDTPRIVLIRSRKVGLMNR. The helical transmembrane segment at 34-54 threads the bilayer; it reads AVQLLILAYVIGWVFVWEKGY. Topologically, residues 55 to 338 are extracellular; that stretch reads QETDSVVSSV…KFDIIPTMIN (284 aa). Lysine 67 and lysine 69 together coordinate ATP. Residues lysine 67 and lysine 69 each coordinate CTP. Asparagine 75 and asparagine 110 each carry an N-linked (GlcNAc...) asparagine glycan. 3 cysteine pairs are disulfide-bonded: cysteine 116-cysteine 165, cysteine 126-cysteine 149, and cysteine 132-cysteine 159. 2 N-linked (GlcNAc...) asparagine glycosylation sites follow: asparagine 153 and asparagine 184. The ATP site is built by threonine 186 and leucine 188. Residue threonine 186 coordinates CTP. N-linked (GlcNAc...) asparagine glycosylation is found at asparagine 199 and asparagine 208. Cystine bridges form between cysteine 217-cysteine 227 and cysteine 261-cysteine 270. 3 residues coordinate ATP: asparagine 293, arginine 295, and lysine 313. 3 residues coordinate CTP: asparagine 293, arginine 295, and lysine 313. The helical transmembrane segment at 339-359 threads the bilayer; that stretch reads IGSGLALLGMATVLCDIIVLY. The Cytoplasmic segment spans residues 360 to 388; it reads CMKKRLYYREKKYKYVEDYEQGLASELDQ.

It belongs to the P2X receptor family. Functional P2RXs are organized as homomeric and heteromeric trimers. Forms heterotrimer with P2RX1. Interacts with P2RX7 (via C-terminus); this interaction is functional only in the presence of ATP. Forms heterotrimer with P2RX4; functional differences between homomeric P2RX4 and P2RX4/6 heterotrimer are minor. Interacts with AP1M2.

The protein resides in the cell membrane. It is found in the lysosome membrane. The catalysed reaction is K(+)(in) = K(+)(out). It carries out the reaction Na(+)(in) = Na(+)(out). It catalyses the reaction Ca(2+)(in) = Ca(2+)(out). With respect to regulation, activated by ATP. pH-dependent and inhibited by acidic pH. ATP-gated nonselective transmembrane cation channel permeable to potassium, sodium and calcium. CTP, but not GTP or UTP, functions as a weak affinity agonist for P2RX4. Activated by extracellularly released ATP, it plays multiple role in immunity and central nervous system physiology. Plays a key role in initial steps of T-cell activation and Ca(2+) microdomain formation. Also participates in basal T-cell activity without TCR/CD3 stimulation. Promotes the differentiation and activation of Th17 cells via expression of retinoic acid-related orphan receptor C/RORC. Upon activation, drives microglia motility via the PI3K/Akt pathway. Could also function as an ATP-gated cation channel of lysosomal membranes. In Homo sapiens (Human), this protein is P2X purinoceptor 4 (P2RX4).